A 640-amino-acid polypeptide reads, in one-letter code: 1,4-alpha-glucan branching enzyme GlgB (640 aa).

D318 functions as the Nucleophile in the catalytic mechanism. E371 functions as the Proton donor in the catalytic mechanism.

It belongs to the glycosyl hydrolase 13 family. GlgB subfamily. Monomer.

The enzyme catalyses Transfers a segment of a (1-&gt;4)-alpha-D-glucan chain to a primary hydroxy group in a similar glucan chain.. It functions in the pathway glycan biosynthesis; glycogen biosynthesis. Functionally, catalyzes the formation of the alpha-1,6-glucosidic linkages in glycogen by scission of a 1,4-alpha-linked oligosaccharide from growing alpha-1,4-glucan chains and the subsequent attachment of the oligosaccharide to the alpha-1,6 position. This Francisella philomiragia subsp. philomiragia (strain ATCC 25017 / CCUG 19701 / FSC 153 / O#319-036) protein is 1,4-alpha-glucan branching enzyme GlgB.